A 233-amino-acid polypeptide reads, in one-letter code: Sugar fermentation stimulation protein homolog (233 aa).

This sequence belongs to the SfsA family.

This Rhodospirillum centenum (strain ATCC 51521 / SW) protein is Sugar fermentation stimulation protein homolog.